Here is a 313-residue protein sequence, read N- to C-terminus: Ribosomal RNA small subunit methyltransferase H (313 aa).

S-adenosyl-L-methionine contacts are provided by residues 35 to 37 (GGH), aspartate 55, phenylalanine 79, aspartate 101, and glutamine 108. A disordered region spans residues 276-300 (QGGPTLKSVGKMMPPDDEVADNPRA).

The protein belongs to the methyltransferase superfamily. RsmH family.

The protein localises to the cytoplasm. The catalysed reaction is cytidine(1402) in 16S rRNA + S-adenosyl-L-methionine = N(4)-methylcytidine(1402) in 16S rRNA + S-adenosyl-L-homocysteine + H(+). In terms of biological role, specifically methylates the N4 position of cytidine in position 1402 (C1402) of 16S rRNA. The protein is Ribosomal RNA small subunit methyltransferase H of Dickeya chrysanthemi (strain Ech1591) (Dickeya zeae (strain Ech1591)).